The chain runs to 81 residues: Tissue- and phase-specific nuclear protein (81 aa).

In terms of tissue distribution, expressed in oviduct, where expression levels are higher in uterine sections than in tuba sections. No expression detected in small intestine and liver (at protein level).

It is found in the nucleus. The chain is Tissue- and phase-specific nuclear protein from Podarcis siculus (Italian wall lizard).